Consider the following 408-residue polypeptide: ORC1-type DNA replication protein 15 (408 aa).

Residues 60–64, tyrosine 208, and arginine 220 each bind ATP; that span reads VGKTA.

It belongs to the CDC6/cdc18 family.

In terms of biological role, involved in regulation of DNA replication. In Haloarcula marismortui (strain ATCC 43049 / DSM 3752 / JCM 8966 / VKM B-1809) (Halobacterium marismortui), this protein is ORC1-type DNA replication protein 15 (cdc6o).